Here is a 237-residue protein sequence, read N- to C-terminus: Tetraspanin-8 (237 aa).

At 1-9 (MAGVSACIK) the chain is on the cytoplasmic side. The chain crosses the membrane as a helical span at residues 10 to 33 (YSMFTFNFLFWLCGILILALAIWV). Residues 34 to 57 (RVSNDSQAIFGSEDVGSSSYVAVD) lie on the Extracellular side of the membrane. Residues 58-72 (ILIAVGAIIMILGFL) form a helical membrane-spanning segment. Over 73 to 83 (GCCGAIKESRC) the chain is Cytoplasmic. The chain crosses the membrane as a helical span at residues 84-109 (MLLLFFIGLLLILLLQVATGILGAVF). Residues 110 to 205 (KSKSDRIVNE…SFIKDFLAKN (96 aa)) lie on the Extracellular side of the membrane. A glycan (N-linked (GlcNAc...) asparagine) is linked at Asn-118. Residues 206–230 (LIIVIGISFGLAVIEILGLVFSMVL) traverse the membrane as a helical segment. At 231–237 (YCQIGNK) the chain is on the cytoplasmic side.

This sequence belongs to the tetraspanin (TM4SF) family. In terms of assembly, forms homooligomers. Interacts with MEP1B. Interacts with integrin alpha3/ITGA3. Interacts with RICTOR and MTOR. Interacts with ADAM17. Interacts with ECE1. As to expression, gastric, colon, rectal, and pancreatic carcinomas.

Its subcellular location is the cell membrane. Structural component of specialized membrane microdomains known as tetraspanin-enriched microdomains (TERMs), which act as platforms for receptor clustering and signaling. Participates thereby in diverse biological functions such as cell signal transduction, migration and protein trafficking. Promotes ADAM17-mediated TNF-alpha processing through recruitment of ADAM17 to tetraspanin-enriched micro-domains (TEMs). Forms a complex with RICTOR and integrin alpha3/ITGA3 to mediate mTORC2 activation and AKT1 phosphorylation leading to cell migration. Reduces apoptosis and autophagy induced by high glucose levels through forming a complex with mTOR and RICTOR. Contributes to the maintenance of intestinal epithelial barrier and plays a role in the regulation of intestine inflammation by switching interferon gamma receptor 1/IFNGR1 from clathrin-dependent to lipid raft-dependent endocytosis route to limit STAT1 activation magnitude and duration. Acts as a modulator of the endothelin axis by associating with endothelin converting enzyme ECE1 and regulating its activity of conversion of the endothelin-1 precursor to endothelin. In Homo sapiens (Human), this protein is Tetraspanin-8 (TSPAN8).